We begin with the raw amino-acid sequence, 374 residues long: Dual-specificity RNA methyltransferase RlmN (374 aa).

Glutamate 91 functions as the Proton acceptor in the catalytic mechanism. Positions 97–340 (EDDRGTLCVS…TTVRKTRGDD (244 aa)) constitute a Radical SAM core domain. An intrachain disulfide couples cysteine 104 to cysteine 345. Cysteine 111, cysteine 115, and cysteine 118 together coordinate [4Fe-4S] cluster. S-adenosyl-L-methionine contacts are provided by residues 166 to 167 (GE), serine 198, 220 to 222 (SLH), and asparagine 302. Residue cysteine 345 is the S-methylcysteine intermediate of the active site.

The protein belongs to the radical SAM superfamily. RlmN family. The cofactor is [4Fe-4S] cluster.

It localises to the cytoplasm. The catalysed reaction is adenosine(2503) in 23S rRNA + 2 reduced [2Fe-2S]-[ferredoxin] + 2 S-adenosyl-L-methionine = 2-methyladenosine(2503) in 23S rRNA + 5'-deoxyadenosine + L-methionine + 2 oxidized [2Fe-2S]-[ferredoxin] + S-adenosyl-L-homocysteine. The enzyme catalyses adenosine(37) in tRNA + 2 reduced [2Fe-2S]-[ferredoxin] + 2 S-adenosyl-L-methionine = 2-methyladenosine(37) in tRNA + 5'-deoxyadenosine + L-methionine + 2 oxidized [2Fe-2S]-[ferredoxin] + S-adenosyl-L-homocysteine. Functionally, specifically methylates position 2 of adenine 2503 in 23S rRNA and position 2 of adenine 37 in tRNAs. m2A2503 modification seems to play a crucial role in the proofreading step occurring at the peptidyl transferase center and thus would serve to optimize ribosomal fidelity. The protein is Dual-specificity RNA methyltransferase RlmN of Delftia acidovorans (strain DSM 14801 / SPH-1).